Here is a 553-residue protein sequence, read N- to C-terminus: Arginine--tRNA ligase (553 aa).

The short motif at 130–140 (ANPTGDLHIGH) is the 'HIGH' region element.

It belongs to the class-I aminoacyl-tRNA synthetase family. In terms of assembly, monomer.

The protein resides in the cytoplasm. It catalyses the reaction tRNA(Arg) + L-arginine + ATP = L-arginyl-tRNA(Arg) + AMP + diphosphate. The sequence is that of Arginine--tRNA ligase from Staphylococcus aureus (strain MSSA476).